A 265-amino-acid polypeptide reads, in one-letter code: Undecaprenyl-diphosphatase (265 aa).

7 helical membrane-spanning segments follow: residues 38-58 (RSDF…CLAL), 75-95 (RDYV…GLIV), 108-128 (PVAW…HFAG), 135-155 (VVTW…GVFP), 181-201 (FVFM…LLEM), 215-235 (VAVA…WLLG), and 244-264 (VFAV…PAAA).

This sequence belongs to the UppP family.

Its subcellular location is the cell inner membrane. It carries out the reaction di-trans,octa-cis-undecaprenyl diphosphate + H2O = di-trans,octa-cis-undecaprenyl phosphate + phosphate + H(+). Catalyzes the dephosphorylation of undecaprenyl diphosphate (UPP). Confers resistance to bacitracin. The protein is Undecaprenyl-diphosphatase of Xanthomonas axonopodis pv. citri (strain 306).